We begin with the raw amino-acid sequence, 532 residues long: Light-independent protochlorophyllide reductase subunit B (532 aa).

Position 36 (D36) interacts with [4Fe-4S] cluster. D282 (proton donor) is an active-site residue. Residue 417–418 (GL) participates in substrate binding.

Belongs to the ChlB/BchB/BchZ family. In terms of assembly, protochlorophyllide reductase is composed of three subunits; BchL, BchN and BchB. Forms a heterotetramer of two BchB and two BchN subunits. [4Fe-4S] cluster is required as a cofactor.

It catalyses the reaction chlorophyllide a + oxidized 2[4Fe-4S]-[ferredoxin] + 2 ADP + 2 phosphate = protochlorophyllide a + reduced 2[4Fe-4S]-[ferredoxin] + 2 ATP + 2 H2O. It functions in the pathway porphyrin-containing compound metabolism; bacteriochlorophyll biosynthesis (light-independent). Component of the dark-operative protochlorophyllide reductase (DPOR) that uses Mg-ATP and reduced ferredoxin to reduce ring D of protochlorophyllide (Pchlide) to form chlorophyllide a (Chlide). This reaction is light-independent. The NB-protein (BchN-BchB) is the catalytic component of the complex. The protein is Light-independent protochlorophyllide reductase subunit B of Methylobacterium radiotolerans (strain ATCC 27329 / DSM 1819 / JCM 2831 / NBRC 15690 / NCIMB 10815 / 0-1).